A 656-amino-acid chain; its full sequence is Chromosomal replication initiator protein DnaA (656 aa).

A domain I, interacts with DnaA modulators region spans residues 1–100 (MADVPADLAA…TAGEPAGPAP (100 aa)). The tract at residues 91-313 (TAGEPAGPAP…PAPATGPGEP (223 aa)) is disordered. Over residues 97-109 (GPAPQAPQSPPSR) the composition is skewed to pro residues. The segment at 101–315 (QAPQSPPSRP…PATGPGEPTA (215 aa)) is domain II. Composition is skewed to basic and acidic residues over residues 126–144 (GREEYRDRDEYEGYGRNRA) and 231–273 (QRGD…RDLP). Residues 291–313 (GPATGAPGPLAAQPAPATGPGEP) are compositionally biased toward low complexity. The segment at 316 to 532 (RLNPKYLFDT…GALIRVTAFA (217 aa)) is domain III, AAA+ region. ATP-binding residues include glycine 360, glycine 362, lysine 363, and threonine 364. The domain IV, binds dsDNA stretch occupies residues 533-656 (SLNRQPVDLG…TELTNRIKNG (124 aa)).

This sequence belongs to the DnaA family. As to quaternary structure, oligomerizes as a right-handed, spiral filament on DNA at oriC.

Its subcellular location is the cytoplasm. Its function is as follows. Plays an essential role in the initiation and regulation of chromosomal replication. ATP-DnaA binds to the origin of replication (oriC) to initiate formation of the DNA replication initiation complex once per cell cycle. Binds the DnaA box (a 9 base pair repeat at the origin) and separates the double-stranded (ds)DNA. Forms a right-handed helical filament on oriC DNA; dsDNA binds to the exterior of the filament while single-stranded (ss)DNA is stabiized in the filament's interior. The ATP-DnaA-oriC complex binds and stabilizes one strand of the AT-rich DNA unwinding element (DUE), permitting loading of DNA polymerase. After initiation quickly degrades to an ADP-DnaA complex that is not apt for DNA replication. Binds acidic phospholipids. The sequence is that of Chromosomal replication initiator protein DnaA from Streptomyces coelicolor (strain ATCC BAA-471 / A3(2) / M145).